A 197-amino-acid chain; its full sequence is Protein GrpE (197 aa).

A compositionally biased stretch (basic and acidic residues) spans 1–27; that stretch reads MTKQEKAENQEKPTEETVEETPKKETP. The tract at residues 1 to 50 is disordered; that stretch reads MTKQEKAENQEKPTEETVEETPKKETPFEPVMEADEVEETTEAQAPVEEA. The segment covering 32-41 has biased composition (acidic residues); that stretch reads MEADEVEETT.

The protein belongs to the GrpE family. As to quaternary structure, homodimer.

It is found in the cytoplasm. Its function is as follows. Participates actively in the response to hyperosmotic and heat shock by preventing the aggregation of stress-denatured proteins, in association with DnaK and GrpE. It is the nucleotide exchange factor for DnaK and may function as a thermosensor. Unfolded proteins bind initially to DnaJ; upon interaction with the DnaJ-bound protein, DnaK hydrolyzes its bound ATP, resulting in the formation of a stable complex. GrpE releases ADP from DnaK; ATP binding to DnaK triggers the release of the substrate protein, thus completing the reaction cycle. Several rounds of ATP-dependent interactions between DnaJ, DnaK and GrpE are required for fully efficient folding. This Latilactobacillus sakei (Lactobacillus sakei) protein is Protein GrpE.